A 272-amino-acid polypeptide reads, in one-letter code: Shikimate dehydrogenase (NADP(+)) (272 aa).

Residues 14–16 (SLS) and T61 contribute to the shikimate site. K65 functions as the Proton acceptor in the catalytic mechanism. Residue D102 participates in shikimate binding. NADP(+) contacts are provided by residues 127-131 (GAGGA), 151-156 (NRTPSK), and L215. Y217 is a binding site for shikimate. NADP(+) is bound at residue G239.

Belongs to the shikimate dehydrogenase family. Homodimer.

The catalysed reaction is shikimate + NADP(+) = 3-dehydroshikimate + NADPH + H(+). The protein operates within metabolic intermediate biosynthesis; chorismate biosynthesis; chorismate from D-erythrose 4-phosphate and phosphoenolpyruvate: step 4/7. In terms of biological role, involved in the biosynthesis of the chorismate, which leads to the biosynthesis of aromatic amino acids. Catalyzes the reversible NADPH linked reduction of 3-dehydroshikimate (DHSA) to yield shikimate (SA). This is Shikimate dehydrogenase (NADP(+)) from Coxiella burnetii (strain Dugway 5J108-111).